The chain runs to 378 residues: GTP 3',8-cyclase 3 (378 aa).

The Radical SAM core domain occupies 40–259; sequence RCGRTMGDLR…STLGKKYGPI (220 aa). R49 provides a ligand contact to GTP. 2 residues coordinate [4Fe-4S] cluster: C56 and C60. Y62 contributes to the S-adenosyl-L-methionine binding site. A [4Fe-4S] cluster-binding site is contributed by C63. R99 is a GTP binding site. G103 contributes to the S-adenosyl-L-methionine binding site. T134 serves as a coordination point for GTP. S158 serves as a coordination point for S-adenosyl-L-methionine. Residue K195 participates in GTP binding. M229 is a binding site for S-adenosyl-L-methionine. 2 residues coordinate [4Fe-4S] cluster: C292 and C295. GTP is bound at residue 297–299; that stretch reads RSR. C309 is a binding site for [4Fe-4S] cluster.

The protein belongs to the radical SAM superfamily. MoaA family. As to quaternary structure, monomer and homodimer. Requires [4Fe-4S] cluster as cofactor.

It catalyses the reaction GTP + AH2 + S-adenosyl-L-methionine = (8S)-3',8-cyclo-7,8-dihydroguanosine 5'-triphosphate + 5'-deoxyadenosine + L-methionine + A + H(+). The protein operates within cofactor biosynthesis; molybdopterin biosynthesis. Its function is as follows. Catalyzes the cyclization of GTP to (8S)-3',8-cyclo-7,8-dihydroguanosine 5'-triphosphate. This is GTP 3',8-cyclase 3 from Mycobacterium bovis (strain ATCC BAA-935 / AF2122/97).